The sequence spans 262 residues: Indole-3-glycerol phosphate synthase (262 aa).

It belongs to the TrpC family.

The catalysed reaction is 1-(2-carboxyphenylamino)-1-deoxy-D-ribulose 5-phosphate + H(+) = (1S,2R)-1-C-(indol-3-yl)glycerol 3-phosphate + CO2 + H2O. It participates in amino-acid biosynthesis; L-tryptophan biosynthesis; L-tryptophan from chorismate: step 4/5. In Bordetella pertussis (strain Tohama I / ATCC BAA-589 / NCTC 13251), this protein is Indole-3-glycerol phosphate synthase.